A 924-amino-acid chain; its full sequence is MMELRVICIIRLVVACVLCLCIFIRSASSATEGFESIACCADSNYTDPKTNLNYTTDYRWYSDKSNCRQIPEILLSHRSNINFRLFDIDEGKRCYNLPTIKDQVYLIRGTFPFDSVNTSFYVSIGATELGEVTSSRLEDLEIEGVFRAPKDNIDFCLLKEDVNPFISQLELRPLPEEYLHDFSTNVLKLISRNNLCGIEDDIRFPVDQNDRIWKATSTPSYALPLSFNVSNVELNGKVTPPLQVLQTALTHPERLEFVHVGLETDDYEYSVLLYFLELNDTLKAGQRVFDIYLNSEIKKEGFDVLEGGSKYSYTVLNISANGSLNITLVKASGSKFGPLLNAYEILQARPWIDETDQTDLEVIQKMRKELLLQNQDNEALESWSGDPCMLFPWKGVACDGSNGSSVITKLDLSSSNLKGTIPSSVTEMTKLQILNLSHNHFDGYIPSFPPSSLLISVDLSYNDLTGQLPESIISLPHLNSLYFGCNQHMRDDDEAKLNSSLINTDYGRCNAKKPKFGQVFMIGAITSGSILITLAVVILFFCRYRHKSITLEGFGGKTYPMATNIIFSLPSKDDFFIKSVSVKPFTLEYIELATEKYKTLIGEGGFGSVYRGTLDDGQEVAVKVRSATSTQGTREFDNELNLLSAIQHENLVPLLGYCNEYDQQILVYPFMSNGSLLDRLYGEPAKRKILDWPTRLSIALGAARGLAYLHTFPGRSVIHRDVKSSNILLDHSMCAKVADFGFSKYAPQEGDSYVSLEVRGTAGYLDPEYYKTQQLSEKSDVFSFGVVLLEIVSGREPLNIKRPRVEWSLVEWAKPYIRASKVDEIVDPGIKGGYHAEALWRVVEVALQCLEPYSTYRPCMVDIVRELEDALIIENNASEYMKSIDSLGGSNRYSIVMDKRALPSTTSTAESTITTQNVSHPQPR.

An N-terminal signal peptide occupies residues 1–29; it reads MMELRVICIIRLVVACVLCLCIFIRSASS. A coiled-coil region spans residues 361–382; the sequence is EVIQKMRKELLLQNQDNEALES. LRR repeat units follow at residues 406-428, 430-452, 453-475, and 477-498; these read VITKLDLSSSNLKGTIPSSVTEM, KLQILNLSHNHFDGYIPSFPPSS, LLISVDLSYNDLTGQLPESIISL, and HLNSLYFGCNQHMRDDDEAKLN. Residues 520–540 form a helical membrane-spanning segment; it reads FMIGAITSGSILITLAVVILF. The Protein kinase domain maps to 595–872; sequence EKYKTLIGEG…IVRELEDALI (278 aa). ATP-binding positions include 601 to 609 and K623; that span reads IGEGGFGSV. Catalysis depends on D721, which acts as the Proton acceptor.

Belongs to the protein kinase superfamily. Ser/Thr protein kinase family. May be phosphorylated.

The protein resides in the membrane. The enzyme catalyses L-seryl-[protein] + ATP = O-phospho-L-seryl-[protein] + ADP + H(+). The catalysed reaction is L-threonyl-[protein] + ATP = O-phospho-L-threonyl-[protein] + ADP + H(+). In terms of biological role, involved in the perception of symbiotic fungi and bacteria and required for the calcium spiking. Part of the perception/transduction system leading to nodulation or mycorrhizal infection. In Pisum sativum (Garden pea), this protein is Nodulation receptor kinase (NORK).